An 87-amino-acid chain; its full sequence is UPF0248 protein TSIB_1445 (87 aa).

The protein belongs to the UPF0248 family.

The protein is UPF0248 protein TSIB_1445 of Thermococcus sibiricus (strain DSM 12597 / MM 739).